Consider the following 92-residue polypeptide: Small ribosomal subunit protein uS19 (92 aa).

It belongs to the universal ribosomal protein uS19 family.

Functionally, protein S19 forms a complex with S13 that binds strongly to the 16S ribosomal RNA. The chain is Small ribosomal subunit protein uS19 from Staphylococcus carnosus (strain TM300).